We begin with the raw amino-acid sequence, 205 residues long: uncharacterized protein (205 aa).

Residues Q10–D75 are a coiled coil. A disordered region spans residues M108–F141. Positions P111–F141 are enriched in polar residues.

Belongs to the asfivirus K205R family.

The protein resides in the host cytoplasm. In terms of biological role, induces host endoplasmic reticulum stress and consequently activates autophagy and NF-kappa-B signaling pathway. In turn, may induce autophagy-mediated STING1 degradation and innate immune evasion. This is an uncharacterized protein from Ornithodoros (relapsing fever ticks).